Reading from the N-terminus, the 473-residue chain is Pyruvate kinase (473 aa).

Position 32 (arginine 32) interacts with substrate. 4 residues coordinate K(+): asparagine 34, serine 36, aspartate 66, and threonine 67. An ATP-binding site is contributed by 34–37; it reads NFSH. ATP is bound by residues arginine 73 and lysine 155. A Mg(2+)-binding site is contributed by glutamate 221. The substrate site is built by glycine 244, aspartate 245, and threonine 277. Aspartate 245 provides a ligand contact to Mg(2+).

Belongs to the pyruvate kinase family. As to quaternary structure, homotetramer. Requires Mg(2+) as cofactor. K(+) serves as cofactor.

It carries out the reaction pyruvate + ATP = phosphoenolpyruvate + ADP + H(+). Its pathway is carbohydrate degradation; glycolysis; pyruvate from D-glyceraldehyde 3-phosphate: step 5/5. In Clostridium acetobutylicum (strain ATCC 824 / DSM 792 / JCM 1419 / IAM 19013 / LMG 5710 / NBRC 13948 / NRRL B-527 / VKM B-1787 / 2291 / W), this protein is Pyruvate kinase (pyk).